Here is a 229-residue protein sequence, read N- to C-terminus: Ribonuclease 3 (229 aa).

An RNase III domain is found at 5-127 (LDRLERKLGY…LIGAIYLDTG (123 aa)). Residue E40 participates in Mg(2+) binding. Residue D44 is part of the active site. Residues D113 and E116 each coordinate Mg(2+). The active site involves E116. The DRBM domain occupies 154–224 (DPKTRLQEFL…AAAALVALGV (71 aa)).

This sequence belongs to the ribonuclease III family. In terms of assembly, homodimer. It depends on Mg(2+) as a cofactor.

It is found in the cytoplasm. The catalysed reaction is Endonucleolytic cleavage to 5'-phosphomonoester.. In terms of biological role, digests double-stranded RNA. Involved in the processing of primary rRNA transcript to yield the immediate precursors to the large and small rRNAs (23S and 16S). Processes some mRNAs, and tRNAs when they are encoded in the rRNA operon. Processes pre-crRNA and tracrRNA of type II CRISPR loci if present in the organism. The sequence is that of Ribonuclease 3 from Pseudomonas aeruginosa (strain LESB58).